The following is a 100-amino-acid chain: Aspartyl/glutamyl-tRNA(Asn/Gln) amidotransferase subunit C (100 aa).

It belongs to the GatC family. As to quaternary structure, heterotrimer of A, B and C subunits.

The enzyme catalyses L-glutamyl-tRNA(Gln) + L-glutamine + ATP + H2O = L-glutaminyl-tRNA(Gln) + L-glutamate + ADP + phosphate + H(+). It catalyses the reaction L-aspartyl-tRNA(Asn) + L-glutamine + ATP + H2O = L-asparaginyl-tRNA(Asn) + L-glutamate + ADP + phosphate + 2 H(+). In terms of biological role, allows the formation of correctly charged Asn-tRNA(Asn) or Gln-tRNA(Gln) through the transamidation of misacylated Asp-tRNA(Asn) or Glu-tRNA(Gln) in organisms which lack either or both of asparaginyl-tRNA or glutaminyl-tRNA synthetases. The reaction takes place in the presence of glutamine and ATP through an activated phospho-Asp-tRNA(Asn) or phospho-Glu-tRNA(Gln). This chain is Aspartyl/glutamyl-tRNA(Asn/Gln) amidotransferase subunit C, found in Corynebacterium aurimucosum (strain ATCC 700975 / DSM 44827 / CIP 107346 / CN-1) (Corynebacterium nigricans).